The chain runs to 418 residues: Putative F-box protein At3g23950 (418 aa).

In terms of domain architecture, F-box spans 1–42 (MNIPPELTFEVLVRLPLKSLARFRSMCKEWKLVIDSEFFRDC).

The protein is Putative F-box protein At3g23950 of Arabidopsis thaliana (Mouse-ear cress).